Consider the following 264-residue polypeptide: Sexual differentiation protein ste4 (264 aa).

An SAM domain is found at 11-73 (WNNEAVCNWI…LSAIQSMKKQ (63 aa)). The tract at residues 111 to 139 (LEKRVEYLETENTKLVKTLNSLNSEFLQL) is leucine-zipper. Positions 176 to 264 (GSFDLEVNDS…PSFVLSRRSC (89 aa)) constitute a Ras-associating domain.

In terms of assembly, homodimer or heterodimer with another leucine-zipper protein.

Its function is as follows. Essential for mating and meiosis. The chain is Sexual differentiation protein ste4 (ste4) from Schizosaccharomyces pombe (strain 972 / ATCC 24843) (Fission yeast).